Consider the following 1153-residue polypeptide: Myosin-3 (1153 aa).

The Myosin N-terminal SH3-like domain occupies 104 to 153; that stretch reads KKVLQFWVQLPNGNWELGKIMSTSGEESVIVVTEGKVLKVKSETLVPANP. Positions 157-829 constitute a Myosin motor domain; that stretch reads DGVDDLMQLS…QIGVLEDTRN (673 aa). Residues 248–255 and 296–304 contribute to the ATP site; these read GESGAGKT and NDNSSRFGK. 2 actin-binding regions span residues 581–615 and 709–731; these read LFEK…KQHL and LFQL…KPNN. IQ domains follow at residues 831–860, 854–883, and 903–932; these read TLHG…GITI, LKTG…RHRA, and TVDA…LSSG. The stretch at 948-996 forms a coiled coil; that stretch reads YLSDLQRRVLRTEAALREKEEENDILRQRVQQYDNRWSEYETKMKSMEE. Residues 1020–1050 form a disordered region; that stretch reads DSARNSDASVNASDATDLDSGGSHYQMGHGR. The segment covering 1024-1033 has biased composition (polar residues); that stretch reads NSDASVNASD.

Belongs to the TRAFAC class myosin-kinesin ATPase superfamily. Myosin family. Plant myosin class VIII subfamily. In terms of assembly, homodimer.

Myosin heavy chain that is required for the cell cycle-regulated transport of various organelles and proteins for their segregation. Functions by binding with its tail domain to receptor proteins on organelles and exerting force with its N-terminal motor domain against actin filaments, thereby transporting its cargo along polarized actin cables. The sequence is that of Myosin-3 (VIII-A) from Arabidopsis thaliana (Mouse-ear cress).